We begin with the raw amino-acid sequence, 99 residues long: Large ribosomal subunit protein bL21 (99 aa).

It belongs to the bacterial ribosomal protein bL21 family. As to quaternary structure, part of the 50S ribosomal subunit. Contacts protein L20.

Its function is as follows. This protein binds to 23S rRNA in the presence of protein L20. This Mesomycoplasma hyopneumoniae (strain 232) (Mycoplasma hyopneumoniae) protein is Large ribosomal subunit protein bL21.